The primary structure comprises 132 residues: Small ribosomal subunit protein uS8c (132 aa).

It belongs to the universal ribosomal protein uS8 family. Part of the 30S ribosomal subunit.

It is found in the plastid. Its subcellular location is the chloroplast. One of the primary rRNA binding proteins, it binds directly to 16S rRNA central domain where it helps coordinate assembly of the platform of the 30S subunit. The chain is Small ribosomal subunit protein uS8c (rps8) from Cycas taitungensis (Prince sago).